We begin with the raw amino-acid sequence, 398 residues long: Serine/threonine-protein kinase ppk23 (398 aa).

The 286-residue stretch at 74–359 (YEILEKIEEG…AKEALEHPYF (286 aa)) folds into the Protein kinase domain. ATP contacts are provided by residues 80–88 (IEEGSYGIV) and Lys103. Asp198 (proton acceptor) is an active-site residue. The disordered stretch occupies residues 359-398 (FYESPRPKDPKFFPTFPSKAKGESKEKNVFQSFRSASPKK). Over residues 387–398 (VFQSFRSASPKK) the composition is skewed to polar residues.

This sequence belongs to the protein kinase superfamily. Ser/Thr protein kinase family.

It is found in the nucleus. It catalyses the reaction L-seryl-[protein] + ATP = O-phospho-L-seryl-[protein] + ADP + H(+). It carries out the reaction L-threonyl-[protein] + ATP = O-phospho-L-threonyl-[protein] + ADP + H(+). This Schizosaccharomyces pombe (strain 972 / ATCC 24843) (Fission yeast) protein is Serine/threonine-protein kinase ppk23 (ppk23).